Reading from the N-terminus, the 277-residue chain is Phosphatidylglycerol--prolipoprotein diacylglyceryl transferase (277 aa).

4 helical membrane passes run Ile-18–Ala-38, Ile-51–Tyr-71, Ile-89–Ile-109, and Ile-116–Gly-136. Arg-137 lines the a 1,2-diacyl-sn-glycero-3-phospho-(1'-sn-glycerol) pocket. A run of 3 helical transmembrane segments spans residues Gln-177–Ile-197, Gly-205–Met-225, and Phe-235–Tyr-255.

The protein belongs to the Lgt family.

It localises to the cell membrane. The catalysed reaction is L-cysteinyl-[prolipoprotein] + a 1,2-diacyl-sn-glycero-3-phospho-(1'-sn-glycerol) = an S-1,2-diacyl-sn-glyceryl-L-cysteinyl-[prolipoprotein] + sn-glycerol 1-phosphate + H(+). It participates in protein modification; lipoprotein biosynthesis (diacylglyceryl transfer). Functionally, catalyzes the transfer of the diacylglyceryl group from phosphatidylglycerol to the sulfhydryl group of the N-terminal cysteine of a prolipoprotein, the first step in the formation of mature lipoproteins. The sequence is that of Phosphatidylglycerol--prolipoprotein diacylglyceryl transferase from Listeria innocua serovar 6a (strain ATCC BAA-680 / CLIP 11262).